We begin with the raw amino-acid sequence, 227 residues long: MEIGGLVYLILIITIINLSFGETNNYCKIKCRKGIHTLCKFGTSMKPNCGRNVVKAYGLTNDEKNEILKRHNDFRQNVAKGLETRGKPGPQPPAKNMNVLVWNDELAKIAQTWANQCDFNHDDCRNTAKYQVGQNIAISSTTATQFDRPSKLIKQWEDEVTEFNYKVGLQNSNFRKVGHYTQMVWGKTKEIGCGSIKYIEDNWYTHYLVCNYGPGGNDFNQPIYERK.

The N-terminal stretch at 1-23 is a signal peptide; that stretch reads MEIGGLVYLILIITIINLSFGET. Disulfide bonds link C27–C39, C31–C124, C49–C117, and C193–C210. Residues 68–212 enclose the SCP domain; that stretch reads LKRHNDFRQN…WYTHYLVCNY (145 aa).

Belongs to the CRISP family. Venom allergen 5-like subfamily. In terms of tissue distribution, expressed by the venom gland.

The protein resides in the secreted. The polypeptide is Venom allergen 5.01 (Dolichovespula maculata (Bald-faced hornet)).